Consider the following 359-residue polypeptide: tRNA/tmRNA (uracil-C(5))-methyltransferase (359 aa).

S-adenosyl-L-methionine is bound by residues Q183, Y211, N216, E232, and D292. Catalysis depends on C317, which acts as the Nucleophile. E351 serves as the catalytic Proton acceptor.

It belongs to the class I-like SAM-binding methyltransferase superfamily. RNA M5U methyltransferase family. TrmA subfamily.

It catalyses the reaction uridine(54) in tRNA + S-adenosyl-L-methionine = 5-methyluridine(54) in tRNA + S-adenosyl-L-homocysteine + H(+). The catalysed reaction is uridine(341) in tmRNA + S-adenosyl-L-methionine = 5-methyluridine(341) in tmRNA + S-adenosyl-L-homocysteine + H(+). Its function is as follows. Dual-specificity methyltransferase that catalyzes the formation of 5-methyluridine at position 54 (m5U54) in all tRNAs, and that of position 341 (m5U341) in tmRNA (transfer-mRNA). This Pseudomonas fluorescens (strain Pf0-1) protein is tRNA/tmRNA (uracil-C(5))-methyltransferase.